The following is a 652-amino-acid chain: Leucine aminopeptidase 2 (652 aa).

Residues 165–167 (QLE) and 293–298 (PYGGME) contribute to the a peptide site. H322 provides a ligand contact to Zn(2+). Catalysis depends on E323, which acts as the Proton acceptor. H326 and E345 together coordinate Zn(2+). The active-site Proton donor is Y411.

The protein belongs to the peptidase M1 family. Zn(2+) serves as cofactor.

The protein resides in the cytoplasm. The protein localises to the nucleus. The enzyme catalyses an epoxide + H2O = an ethanediol. In terms of biological role, aminopeptidase that preferentially cleaves di- and tripeptides. Also has low epoxide hydrolase activity (in vitro). Can hydrolyze the epoxide leukotriene LTA(4) but it forms preferentially 5,6-dihydroxy-7,9,11,14-eicosatetraenoic acid rather than the cytokine leukotriene B(4) as the product compared to the homologous mammalian enzyme (in vitro). The polypeptide is Leucine aminopeptidase 2 (Candida glabrata (strain ATCC 2001 / BCRC 20586 / JCM 3761 / NBRC 0622 / NRRL Y-65 / CBS 138) (Yeast)).